We begin with the raw amino-acid sequence, 366 residues long: uncharacterized protein (366 aa).

One can recognise an OBG-type G domain in the interval 64–289; that stretch reads GTVGFIGFPS…LKETMWDYLN (226 aa). GTP is bound by residues 70–77, 116–120, and 247–250; these read GFPSVGKS, DLPGI, and NKID. The TGS domain maps to 289–365; that stretch reads NLVRVYTRPR…LDEDVVTIVK (77 aa).

It belongs to the TRAFAC class OBG-HflX-like GTPase superfamily. OBG GTPase family.

This is an uncharacterized protein from Schizosaccharomyces pombe (strain 972 / ATCC 24843) (Fission yeast).